Consider the following 447-residue polypeptide: MIKIKKGLDLPIAGAPVQTIQDGPAIHHVALLGEEYVGMRPSMLVQEGDQVKKGQALFEDKKNPGVLFTAPASGKISAINRGERRVLQSVVIEVEGDEQIPFEHYAAEELNQLSDEQVQHHLLTSGLWTALRTRPFSKTPVPGSRPRAIFISAMDTQPLAADPQVIIATESEAFNHGLTVLTRLTDGKVHVCHAAGQAVTRHTNTQVTYNEFSGPHPAGLVGTHIHFLEPVSQTKMVWHVGYQDVIAIGKLFTRGELCTDRIVALAGPQVNQPILLRTRLGASLSGLTAGKLKEGDNRIISGSVLSGTAFSATHGYLGRFHQQVSVIREGREKELFGWVMPGRDKYSITRTTLGHFFKRKLFAFSTDMHGGERAMVPIGNYERVMPLDILATHLLRDLLAGDTDSAQALGCLELDEEDLALCTFVCPGKYEYGPVLRDILTQIEQEG.

It belongs to the NqrA family. As to quaternary structure, composed of six subunits; NqrA, NqrB, NqrC, NqrD, NqrE and NqrF.

It catalyses the reaction a ubiquinone + n Na(+)(in) + NADH + H(+) = a ubiquinol + n Na(+)(out) + NAD(+). Its function is as follows. NQR complex catalyzes the reduction of ubiquinone-1 to ubiquinol by two successive reactions, coupled with the transport of Na(+) ions from the cytoplasm to the periplasm. NqrA to NqrE are probably involved in the second step, the conversion of ubisemiquinone to ubiquinol. The chain is Na(+)-translocating NADH-quinone reductase subunit A from Yersinia pseudotuberculosis serotype O:1b (strain IP 31758).